The primary structure comprises 333 residues: Adenosine deaminase (333 aa).

Zn(2+)-binding residues include His12 and His14. Positions 14, 16, and 170 each coordinate substrate. His197 provides a ligand contact to Zn(2+). Catalysis depends on Glu200, which acts as the Proton donor. Asp278 is a Zn(2+) binding site. Asp279 lines the substrate pocket.

It belongs to the metallo-dependent hydrolases superfamily. Adenosine and AMP deaminases family. Adenosine deaminase subfamily. It depends on Zn(2+) as a cofactor.

The catalysed reaction is adenosine + H2O + H(+) = inosine + NH4(+). It catalyses the reaction 2'-deoxyadenosine + H2O + H(+) = 2'-deoxyinosine + NH4(+). Its function is as follows. Catalyzes the hydrolytic deamination of adenosine and 2-deoxyadenosine. This chain is Adenosine deaminase, found in Shigella flexneri serotype 5b (strain 8401).